The chain runs to 592 residues: Aspartate--tRNA ligase (592 aa).

An L-aspartate-binding site is contributed by E176. The segment at Q200–K203 is aspartate. An L-aspartate-binding site is contributed by R222. Residues R222–E224 and Q231 contribute to the ATP site. L-aspartate is bound at residue H450. Position 484 (E484) interacts with ATP. L-aspartate is bound at residue R491. G536–R539 is a binding site for ATP.

Belongs to the class-II aminoacyl-tRNA synthetase family. Type 1 subfamily. As to quaternary structure, homodimer.

It is found in the cytoplasm. It carries out the reaction tRNA(Asp) + L-aspartate + ATP = L-aspartyl-tRNA(Asp) + AMP + diphosphate. Its function is as follows. Catalyzes the attachment of L-aspartate to tRNA(Asp) in a two-step reaction: L-aspartate is first activated by ATP to form Asp-AMP and then transferred to the acceptor end of tRNA(Asp). This is Aspartate--tRNA ligase from Macrococcus caseolyticus (strain JCSC5402) (Macrococcoides caseolyticum).